The primary structure comprises 1235 residues: MMQIPKPKDSIWTDDQWSAIVSSGRDILVAAAAGSGKTAVLVERMIRKITAEEDPVDVDRLLVVTFTNASAAEMKHRIAEALEKELAKNPGSLHIRRQLSLLNRASISTLHSFCLQVLKKYYYMIDLDPGFRMADQTEGELLGDEVLDELFEDEYAKGNQAFFELADRYTTDRHDLDLQDLVKRVYEYSRSHPDPEVWLQSFVRLYDVTEESKMEELPFYQYVKEDAEMALFGAKQKLEKALELTKAPGGPAPRADNFLDDLQQIEELISCRHDFDALYERVPAVSFKRAKAVKGDEFDKALLDEATDLRNGAKKLIEKVKTDYFTRSPQDHLKSLADMKPVIETLVQLVISYGKRFEAAKQEKSIIDFSDLEHYCLAILTAVDEEGRRVPSEAAVYYQDQFHEVLVDEYQDTNLVQESILQLVKSGNEEAGNLFMVGDVKQSIYRFRLAEPLLFLGKYKRFTESGAGAGQKIDLNQNFRSRSDILDSTNFLFKQLMGGKIGEVDYDEQAALKLGASYPPNDAAKTELLLIDSADGADSSEDAEDFETVHWEAKAIAGEIRKLVSSPFKVYDGKTKTHRNIQYRDIVILLRSMPWAPQLMEELKNQGIPVYANLTSGYFEAVEVAAALSVLKVIDNPYQDIPLASVLRSPIVGCDENELALIRLEKKKAPFYEALKAYLANADRHDELYQKLRTFYDSLQKWRSFSTNHSVSELIWEVYRDTGYFDYAGGMPGGKQRQANLRVLYDRARSYEATAFRGLFRFLRFIERMQERGDDLGTARALSEQEDVVRLMTIHSSKGLEFPVVFTAGLGRSFNMMDLNKSYLLDKELGFGTKYIHPELRISYPTLPLVAMKKKMRRELLSEELRVLYVALTRAKEKLFLVGSCKNREKQLAKWQAQADRADWLLSEFDRYQASSYLDFIGPALIRHRDMEAHRTPGLSSSEDIARDPSRFHIRMLQQSELLEENPKERAEEKSKRLKAIQQGEPIPDSFSFDDQARRLLEWEYPYRELTAIRTKQSVSELKRKQEYEDEYSGRSLIKPSGDTLLYRRPGFMMKKGLTAAEKGTAMHTVMQHIPLTHVPTAEEAERTVRMLYEKELLTEEQQEAIDIEEIVQFFGTEIGKDLLRALRIDREVPFSMALPAGEVYKDAETAGEPLLVQGIIDCLYETADGLYLLDYKTDRIEGKFRNGFEGAAPILQKRYETQIELYTKAVEQITKTKVKGRALYFFDGGHVLTL.

The UvrD-like helicase ATP-binding domain occupies 10 to 482 (SIWTDDQWSA…IDLNQNFRSR (473 aa)). 31 to 38 (AAAGSGKT) contributes to the ATP binding site. The region spanning 509–799 (QAALKLGASY…RLMTIHSSKG (291 aa)) is the UvrD-like helicase C-terminal domain.

It belongs to the helicase family. AddA subfamily. In terms of assembly, heterodimer of AddA and AddB/RexB. Mg(2+) serves as cofactor.

The enzyme catalyses Couples ATP hydrolysis with the unwinding of duplex DNA by translocating in the 3'-5' direction.. It catalyses the reaction ATP + H2O = ADP + phosphate + H(+). The heterodimer acts as both an ATP-dependent DNA helicase and an ATP-dependent, dual-direction single-stranded exonuclease. Recognizes the chi site generating a DNA molecule suitable for the initiation of homologous recombination. The AddA nuclease domain is required for chi fragment generation; this subunit has the helicase and 3' -&gt; 5' nuclease activities. The chain is ATP-dependent helicase/nuclease subunit A from Bacillus velezensis (strain DSM 23117 / BGSC 10A6 / LMG 26770 / FZB42) (Bacillus amyloliquefaciens subsp. plantarum).